A 304-amino-acid polypeptide reads, in one-letter code: UDP-N-acetylenolpyruvoylglucosamine reductase (304 aa).

The 181-residue stretch at 33–213 folds into the FAD-binding PCMH-type domain; the sequence is IGGPADIMVI…LEITRDLTER (181 aa). The active site involves Arg177. The Proton donor role is filled by Ser227. Glu297 is a catalytic residue.

It belongs to the MurB family. FAD serves as cofactor.

The protein localises to the cytoplasm. It carries out the reaction UDP-N-acetyl-alpha-D-muramate + NADP(+) = UDP-N-acetyl-3-O-(1-carboxyvinyl)-alpha-D-glucosamine + NADPH + H(+). It functions in the pathway cell wall biogenesis; peptidoglycan biosynthesis. In terms of biological role, cell wall formation. This chain is UDP-N-acetylenolpyruvoylglucosamine reductase, found in Alkaliphilus oremlandii (strain OhILAs) (Clostridium oremlandii (strain OhILAs)).